A 313-amino-acid polypeptide reads, in one-letter code: Ribosomal RNA small subunit methyltransferase H (313 aa).

S-adenosyl-L-methionine is bound by residues 35 to 37, D55, F80, D102, and Q109; that span reads GGH.

The protein belongs to the methyltransferase superfamily. RsmH family.

It localises to the cytoplasm. The catalysed reaction is cytidine(1402) in 16S rRNA + S-adenosyl-L-methionine = N(4)-methylcytidine(1402) in 16S rRNA + S-adenosyl-L-homocysteine + H(+). Its function is as follows. Specifically methylates the N4 position of cytidine in position 1402 (C1402) of 16S rRNA. The sequence is that of Ribosomal RNA small subunit methyltransferase H from Shewanella oneidensis (strain ATCC 700550 / JCM 31522 / CIP 106686 / LMG 19005 / NCIMB 14063 / MR-1).